The primary structure comprises 146 residues: Acidic phospholipase A2 D (146 aa).

Positions methionine 1–serine 21 are cleaved as a signal peptide. Residues asparagine 22 to leucine 27 constitute a propeptide that is removed on maturation. 7 disulfides stabilise this stretch: cysteine 38–cysteine 98, cysteine 53–cysteine 145, cysteine 55–cysteine 71, cysteine 70–cysteine 126, cysteine 77–cysteine 119, cysteine 87–cysteine 112, and cysteine 105–cysteine 117. Residues tyrosine 54, glycine 56, and glycine 58 each contribute to the Ca(2+) site. The active site involves histidine 74. Ca(2+) is bound at residue aspartate 75. Aspartate 120 is an active-site residue.

This sequence belongs to the phospholipase A2 family. Group I subfamily. D49 sub-subfamily. Ca(2+) serves as cofactor. Expressed by the venom gland.

It is found in the secreted. It catalyses the reaction a 1,2-diacyl-sn-glycero-3-phosphocholine + H2O = a 1-acyl-sn-glycero-3-phosphocholine + a fatty acid + H(+). Functionally, PLA2 catalyzes the calcium-dependent hydrolysis of the 2-acyl groups in 3-sn-phosphoglycerides. The chain is Acidic phospholipase A2 D from Naja sputatrix (Malayan spitting cobra).